A 548-amino-acid polypeptide reads, in one-letter code: uncharacterized protein (548 aa).

Short-chain dehydrogenase/reductase stretches follow at residues 1 to 250 (MDDR…WMSV) and 271 to 548 (PVED…LLSP). 12–37 (IVVTGAAGGIGRALVDIFAANGDVVV) lines the NADP(+) pocket. A substrate-binding site is contributed by Ser141. Tyr154 acts as the Proton acceptor in catalysis. 280 to 304 (VIVMGGATGVGAAIARRFAENGDTV) is a binding site for NADP(+). Residue Tyr420 is the Proton acceptor of the active site.

The protein belongs to the short-chain dehydrogenases/reductases (SDR) family.

This is an uncharacterized protein from Sinorhizobium fredii (strain NBRC 101917 / NGR234).